The primary structure comprises 119 residues: Holo-[acyl-carrier-protein] synthase (119 aa).

Mg(2+)-binding residues include Asp8 and Glu58.

It belongs to the P-Pant transferase superfamily. AcpS family. It depends on Mg(2+) as a cofactor.

The protein resides in the cytoplasm. It carries out the reaction apo-[ACP] + CoA = holo-[ACP] + adenosine 3',5'-bisphosphate + H(+). Functionally, transfers the 4'-phosphopantetheine moiety from coenzyme A to a Ser of acyl-carrier-protein. This chain is Holo-[acyl-carrier-protein] synthase, found in Streptococcus thermophilus (strain CNRZ 1066).